We begin with the raw amino-acid sequence, 161 residues long: Zinc finger A20 and AN1 domain-containing stress-associated protein 4 (161 aa).

The A20-type zinc finger occupies 10-44 (PEGHRLCVNNCGFFGSSATMNLCSNCYGDLCLKQQ). The Zn(2+) site is built by Cys-16, Cys-20, Cys-32, and Cys-35. The span at 76 to 85 (TTKKTEEKKP) shows a compositional bias: basic and acidic residues. The tract at residues 76 to 99 (TTKKTEEKKPIQIPTEQPSPPQRP) is disordered. The AN1-type zinc-finger motif lies at 96-142 (PQRPNRCTVCRKRVGLTGFMCRCGTTFCGSHRYPEVHGCTFDFKSAG). Residues Cys-102, Cys-105, Cys-116, Cys-118, Cys-123, His-126, His-132, and Cys-134 each contribute to the Zn(2+) site.

May be involved in environmental stress response. This Arabidopsis thaliana (Mouse-ear cress) protein is Zinc finger A20 and AN1 domain-containing stress-associated protein 4 (SAP4).